We begin with the raw amino-acid sequence, 879 residues long: Alanine--tRNA ligase (879 aa).

Residues His566, His570, Cys668, and His672 each coordinate Zn(2+).

The protein belongs to the class-II aminoacyl-tRNA synthetase family. Requires Zn(2+) as cofactor.

Its subcellular location is the cytoplasm. It catalyses the reaction tRNA(Ala) + L-alanine + ATP = L-alanyl-tRNA(Ala) + AMP + diphosphate. Functionally, catalyzes the attachment of alanine to tRNA(Ala) in a two-step reaction: alanine is first activated by ATP to form Ala-AMP and then transferred to the acceptor end of tRNA(Ala). Also edits incorrectly charged Ser-tRNA(Ala) and Gly-tRNA(Ala) via its editing domain. The protein is Alanine--tRNA ligase of Clostridium tetani (strain Massachusetts / E88).